Consider the following 896-residue polypeptide: Protein translocase subunit SecA (896 aa).

ATP contacts are provided by residues Q87, 105–109, and D507; that span reads GEGKT. The tract at residues 853–879 is disordered; sequence ESLSENDEASETQTFRRQEKKIGRNDP. The segment covering 866–876 has biased composition (basic and acidic residues); the sequence is TFRRQEKKIGR. Residues C880, C882, C891, and H892 each coordinate Zn(2+).

The protein belongs to the SecA family. As to quaternary structure, monomer and homodimer. Part of the essential Sec protein translocation apparatus which comprises SecA, SecYEG and auxiliary proteins SecDF-YajC and YidC. Zn(2+) is required as a cofactor.

The protein localises to the cell inner membrane. It is found in the cytoplasm. It catalyses the reaction ATP + H2O + cellular proteinSide 1 = ADP + phosphate + cellular proteinSide 2.. Part of the Sec protein translocase complex. Interacts with the SecYEG preprotein conducting channel. Has a central role in coupling the hydrolysis of ATP to the transfer of proteins into and across the cell membrane, serving both as a receptor for the preprotein-SecB complex and as an ATP-driven molecular motor driving the stepwise translocation of polypeptide chains across the membrane. The chain is Protein translocase subunit SecA from Legionella pneumophila (strain Corby).